We begin with the raw amino-acid sequence, 302 residues long: Actin maturation protease (302 aa).

The tract at residues 1–26 (MPHTNEDPTAQQAGVILDPPPPLPPP) is disordered. A peptidase C39-like region spans residues 85-205 (SLIQEGPQCG…WAVISGVLFG (121 aa)). Residue cysteine 93 is part of the active site.

It belongs to the ACTMAP family.

It is found in the cytoplasm. The enzyme catalyses N-terminal N(alpha)-acetyl-L-methionyl-L-aspartyl-[protein] + H2O = N-terminal L-aspartyl-[protein] + N-acetyl-L-methionine. It carries out the reaction N-terminal N(alpha)-acetyl-L-methionyl-L-glutamyl-[protein] + H2O = N-terminal L-glutamyl-[protein] + N-acetyl-L-methionine. It catalyses the reaction N-terminal N(alpha)-acetyl-L-cysteinyl-L-aspartyl-[protein] + H2O = N-terminal L-aspartyl-[protein] + N-acetyl-L-cysteine. The catalysed reaction is N-terminal N(alpha)-acetyl-L-cysteinyl-L-glutamyl-[protein] + H2O = N-terminal L-glutamyl-[protein] + N-acetyl-L-cysteine. Actin maturation protease that specifically mediates the cleavage of immature acetylated N-terminal actin, thereby contributing to actin maturation. Cleaves N-terminal acetylated methionine of immature cytoplasmic beta- and gamma-actin after translation. Cleaves N-terminal acetylated cysteine of muscle alpha-actin after canonical removal of N-terminal methionine. This is Actin maturation protease from Xenopus tropicalis (Western clawed frog).